The primary structure comprises 416 residues: Putative cell agglutination protein SPAC1348.08c (416 aa).

Positions 1 to 27 (MNFFLYFRTIFLIQLYFFNYSTFGCSA) are cleaved as a signal peptide. Asn-19 carries an N-linked (GlcNAc...) asparagine glycan. 2 repeat units span residues 90–124 (GTVT…EPTA) and 125–160 (GTVT…SPKN). A 2 X 36 AA approximate tandem repeats region spans residues 90-160 (GTVTETTISG…GTVEIVSPKN (71 aa)). The region spanning 224–390 (FNEPAYFGSS…GPLATTSYSY (167 aa)) is the PA14 domain. Asn-344 carries an N-linked (GlcNAc...) asparagine glycan.

It localises to the cell surface. In terms of biological role, may be involved in agglutination during conjugation or other aspects of colony formation. This Schizosaccharomyces pombe (strain 972 / ATCC 24843) (Fission yeast) protein is Putative cell agglutination protein SPAC1348.08c.